The sequence spans 135 residues: ATP synthase epsilon chain 1 (135 aa).

This sequence belongs to the ATPase epsilon chain family. As to quaternary structure, F-type ATPases have 2 components, CF(1) - the catalytic core - and CF(0) - the membrane proton channel. CF(1) has five subunits: alpha(3), beta(3), gamma(1), delta(1), epsilon(1). CF(0) has three main subunits: a, b and c.

The protein resides in the cell inner membrane. Functionally, produces ATP from ADP in the presence of a proton gradient across the membrane. In Nitrobacter hamburgensis (strain DSM 10229 / NCIMB 13809 / X14), this protein is ATP synthase epsilon chain 1.